The chain runs to 171 residues: Adenine phosphoribosyltransferase (171 aa).

The protein belongs to the purine/pyrimidine phosphoribosyltransferase family. In terms of assembly, homodimer.

It is found in the cytoplasm. It catalyses the reaction AMP + diphosphate = 5-phospho-alpha-D-ribose 1-diphosphate + adenine. The protein operates within purine metabolism; AMP biosynthesis via salvage pathway; AMP from adenine: step 1/1. In terms of biological role, catalyzes a salvage reaction resulting in the formation of AMP, that is energically less costly than de novo synthesis. The chain is Adenine phosphoribosyltransferase from Pelotomaculum thermopropionicum (strain DSM 13744 / JCM 10971 / SI).